We begin with the raw amino-acid sequence, 352 residues long: Plant intracellular Ras-group-related LRR protein 1 (352 aa).

The interval 1–25 (MREMGEKRRRGHLNPAGFAGGLHDH) is disordered. LRR repeat units follow at residues 29 to 52 (KNEE…TMSL), 53 to 75 (GQVT…IIAR), 77 to 99 (LNVV…IGCL), 100 to 122 (SKLK…IEEC), 124 to 146 (ALEE…GFEL), 147 to 169 (HSLR…TSHM), 171 to 192 (ALRA…LENL), 195 to 217 (LEAL…VGLL), 218 to 241 (ASLR…GCLT), and 243 to 263 (LARF…VVEQ). A GVYW; degenerate motif is present at residues 264–271 (GLDAMRAY).

This sequence belongs to the SHOC2 family. As to expression, widely expressed but at a lower level in seedlings and stems.

Functionally, leucine-rich repeat protein that likely mediates protein interactions, possibly in the context of signal transduction. The polypeptide is Plant intracellular Ras-group-related LRR protein 1 (IRL1) (Oryza sativa subsp. japonica (Rice)).